We begin with the raw amino-acid sequence, 452 residues long: Heat shock protein 83 (452 aa).

R124 is a binding site for ATP. The TPR repeat-binding motif lies at M448–D452.

It belongs to the heat shock protein 90 family. In terms of assembly, homodimer.

The protein localises to the cytoplasm. Functionally, molecular chaperone that promotes the maturation, structural maintenance and proper regulation of specific target proteins involved for instance in cell cycle control and signal transduction. Undergoes a functional cycle that is linked to its ATPase activity. This cycle probably induces conformational changes in the client proteins, thereby causing their activation. Interacts dynamically with various co-chaperones that modulate its substrate recognition, ATPase cycle and chaperone function. The protein is Heat shock protein 83 (HSP83) of Leishmania donovani.